A 182-amino-acid chain; its full sequence is Ribulose bisphosphate carboxylase small subunit, chloroplastic 6 (182 aa).

The transit peptide at 1–41 directs the protein to the chloroplast; that stretch reads MAATMMSKTIISSKQCSKPIAPPKVSINKGFVNTSAAIKNR.

It belongs to the RuBisCO small chain family. As to quaternary structure, heterohexadecamer of 8 large and 8 small subunits.

It localises to the plastid. The protein localises to the chloroplast. RuBisCO catalyzes two reactions: the carboxylation of D-ribulose 1,5-bisphosphate, the primary event in carbon dioxide fixation, as well as the oxidative fragmentation of the pentose substrate. Both reactions occur simultaneously and in competition at the same active site. Although the small subunit is not catalytic it is essential for maximal activity. The chain is Ribulose bisphosphate carboxylase small subunit, chloroplastic 6 from Acetabularia peniculus (Green alga).